Here is a 283-residue protein sequence, read N- to C-terminus: Transmembrane protein 119 (283 aa).

Positions 1–25 (MVSAAAPSLLILLLLLLGSVPATDA) are cleaved as a signal peptide. The Extracellular segment spans residues 26-96 (RSVPLKATFL…IVDFFRQYVM (71 aa)). A glycan (O-linked (Xyl...) (chondroitin sulfate) serine) is linked at S41. A compositionally biased stretch (low complexity) spans 43-52 (EAEGSSASSP). The interval 43–76 (EAEGSSASSPSLPPPWTPALSPTSMGPQPITLGG) is disordered. Residues 97-117 (LIAVVGSLAFLLMFIVCAAVI) form a helical membrane-spanning segment. Residues 118 to 283 (TRQKQKASAY…CACSSVHPSV (166 aa)) are Cytoplasmic-facing. 2 disordered regions span residues 136 to 168 (KYVD…ALDS) and 183 to 283 (LKSP…HPSV). Composition is skewed to basic and acidic residues over residues 153-164 (VPDRAPDSRPEE) and 198-213 (RMVE…KGSQ). Low complexity predominate over residues 238–264 (GVLEGAVVAGEGQGELEGSLLLAQEAQ). S272 carries the phosphoserine modification.

In terms of assembly, interacts with SMAD1, SMAD5 and RUNX2. In terms of tissue distribution, expressed in brain microglia (at protein level). Detected in urine (at protein level). Elevated expression levels seen in the brain of patients with Alzheimer disease. Expressed by osteoblast-like cells in bone tissues and follicular dendritic cells in lymphoid tissues.

Its subcellular location is the cell membrane. The protein resides in the cytoplasm. The protein localises to the endoplasmic reticulum membrane. It localises to the secreted. Plays an important role in bone formation and normal bone mineralization. Promotes the differentiation of myoblasts into osteoblasts. May induce the commitment and differentiation of myoblasts into osteoblasts through an enhancement of BMP2 production and interaction with the BMP-RUNX2 pathway. Up-regulates the expression of ATF4, a transcription factor which plays a central role in osteoblast differentiation. Essential for normal spermatogenesis and late testicular differentiation. The chain is Transmembrane protein 119 (TMEM119) from Homo sapiens (Human).